Reading from the N-terminus, the 249-residue chain is EID1-like F-box protein 2 (249 aa).

One can recognise an F-box domain in the interval 16-68 (HCTKGHLSEEVLFLMVQHLNWNPNVIATLSCVCKWFDDLAKRLLWKEFCRARA).

The sequence is that of EID1-like F-box protein 2 (EDL2) from Arabidopsis thaliana (Mouse-ear cress).